Consider the following 264-residue polypeptide: Triosephosphate isomerase (264 aa).

Substrate is bound at residue 13 to 15 (NWK). H98 (electrophile) is an active-site residue. The active-site Proton acceptor is E170. Residues G176, S216, and 237-238 (GG) each bind substrate.

The protein belongs to the triosephosphate isomerase family. As to quaternary structure, homodimer.

The protein localises to the cytoplasm. It carries out the reaction D-glyceraldehyde 3-phosphate = dihydroxyacetone phosphate. The protein operates within carbohydrate biosynthesis; gluconeogenesis. It functions in the pathway carbohydrate degradation; glycolysis; D-glyceraldehyde 3-phosphate from glycerone phosphate: step 1/1. Its function is as follows. Involved in the gluconeogenesis. Catalyzes stereospecifically the conversion of dihydroxyacetone phosphate (DHAP) to D-glyceraldehyde-3-phosphate (G3P). The protein is Triosephosphate isomerase of Protochlamydia amoebophila (strain UWE25).